The sequence spans 131 residues: Outer membrane protein assembly factor BamE (131 aa).

Residues 1–16 form the signal peptide; it reads MRNLLLVAAVALSTAG. Residue C17 is the site of N-palmitoyl cysteine attachment. A lipid anchor (S-diacylglycerol cysteine) is attached at C17. The tract at residues 112–131 is disordered; it reads SAPKQFGRNLARDKKKQRGR.

Belongs to the BamE family. As to quaternary structure, part of the Bam complex.

Its subcellular location is the cell outer membrane. Part of the outer membrane protein assembly complex, which is involved in assembly and insertion of beta-barrel proteins into the outer membrane. This Xanthomonas campestris pv. campestris (strain ATCC 33913 / DSM 3586 / NCPPB 528 / LMG 568 / P 25) protein is Outer membrane protein assembly factor BamE.